A 351-amino-acid chain; its full sequence is Probable dual-specificity RNA methyltransferase RlmN (351 aa).

Glutamate 97 serves as the catalytic Proton acceptor. Residues tyrosine 103–aspartate 337 form the Radical SAM core domain. Cysteine 110 and cysteine 342 are disulfide-bonded. 3 residues coordinate [4Fe-4S] cluster: cysteine 117, cysteine 121, and cysteine 124. S-adenosyl-L-methionine is bound by residues glycine 166–glutamate 167, serine 198, serine 221–histidine 223, and asparagine 299. Cysteine 342 acts as the S-methylcysteine intermediate in catalysis.

This sequence belongs to the radical SAM superfamily. RlmN family. [4Fe-4S] cluster serves as cofactor.

The protein resides in the cytoplasm. It carries out the reaction adenosine(2503) in 23S rRNA + 2 reduced [2Fe-2S]-[ferredoxin] + 2 S-adenosyl-L-methionine = 2-methyladenosine(2503) in 23S rRNA + 5'-deoxyadenosine + L-methionine + 2 oxidized [2Fe-2S]-[ferredoxin] + S-adenosyl-L-homocysteine. The catalysed reaction is adenosine(37) in tRNA + 2 reduced [2Fe-2S]-[ferredoxin] + 2 S-adenosyl-L-methionine = 2-methyladenosine(37) in tRNA + 5'-deoxyadenosine + L-methionine + 2 oxidized [2Fe-2S]-[ferredoxin] + S-adenosyl-L-homocysteine. In terms of biological role, specifically methylates position 2 of adenine 2503 in 23S rRNA and position 2 of adenine 37 in tRNAs. This chain is Probable dual-specificity RNA methyltransferase RlmN, found in Natranaerobius thermophilus (strain ATCC BAA-1301 / DSM 18059 / JW/NM-WN-LF).